Reading from the N-terminus, the 150-residue chain is Ribosomal RNA large subunit methyltransferase H (150 aa).

Residues leucine 71, glycine 100, and 118–123 (FSQMTF) each bind S-adenosyl-L-methionine.

This sequence belongs to the RNA methyltransferase RlmH family. In terms of assembly, homodimer.

The protein resides in the cytoplasm. The catalysed reaction is pseudouridine(1915) in 23S rRNA + S-adenosyl-L-methionine = N(3)-methylpseudouridine(1915) in 23S rRNA + S-adenosyl-L-homocysteine + H(+). Specifically methylates the pseudouridine at position 1915 (m3Psi1915) in 23S rRNA. This is Ribosomal RNA large subunit methyltransferase H from Mycoplasmopsis agalactiae (strain NCTC 10123 / CIP 59.7 / PG2) (Mycoplasma agalactiae).